The chain runs to 89 residues: Small ribosomal subunit protein uS15 (89 aa).

It belongs to the universal ribosomal protein uS15 family. As to quaternary structure, part of the 30S ribosomal subunit. Forms a bridge to the 50S subunit in the 70S ribosome, contacting the 23S rRNA.

One of the primary rRNA binding proteins, it binds directly to 16S rRNA where it helps nucleate assembly of the platform of the 30S subunit by binding and bridging several RNA helices of the 16S rRNA. Functionally, forms an intersubunit bridge (bridge B4) with the 23S rRNA of the 50S subunit in the ribosome. This Carboxydothermus hydrogenoformans (strain ATCC BAA-161 / DSM 6008 / Z-2901) protein is Small ribosomal subunit protein uS15.